A 109-amino-acid polypeptide reads, in one-letter code: Cell division suppressor protein YneA (109 aa).

In terms of domain architecture, LysM spans 39 to 90 (SEVNVSEGDSLWALADQYAGKSDMAKADFVSWVEKENNLADGHVEAGESVVI).

It belongs to the YneA family.

Its subcellular location is the cytoplasm. Functionally, inhibits cell division during the SOS response. Affects a later stage of the cell division protein assembly, after the assembly of the Z ring, by probably suppressing recruitment of FtsL and/or DivIC to the division machinery. The protein is Cell division suppressor protein YneA of Listeria monocytogenes serotype 4b (strain F2365).